Reading from the N-terminus, the 608-residue chain is Dolichyl-diphosphooligosaccharide--protein glycosyltransferase subunit 1 (608 aa).

An N-terminal signal peptide occupies residues 1–25 (MESPVALLLLLLLCLGALAPTPGSA). Residues 26 to 440 (SSEAPPLVNE…FNKVLMLQEP (415 aa)) are Lumenal-facing. The residue at position 188 (K188) is an N6-acetyllysine. N-linked (GlcNAc...) asparagine glycosylation occurs at N300. The helical transmembrane segment at 441–458 (LLVVAAFYILFFTVIIYV) threads the bilayer. The Cytoplasmic portion of the chain corresponds to 459 to 608 (RLDFSITKDP…TKIDHILDAL (150 aa)). Residue K539 is modified to N6-acetyllysine; alternate. K539 participates in a covalent cross-link: Glycyl lysine isopeptide (Lys-Gly) (interchain with G-Cter in SUMO2); alternate.

This sequence belongs to the OST1 family. As to quaternary structure, component of the oligosaccharyltransferase (OST) complex. OST exists in two different complex forms which contain common core subunits RPN1, RPN2, OST48, OST4, DAD1 and TMEM258, either STT3A or STT3B as catalytic subunits, and form-specific accessory subunits. STT3A complex assembly occurs through the formation of 3 subcomplexes. Subcomplex 1 contains RPN1 and TMEM258, subcomplex 2 contains the STT3A-specific subunits STT3A, DC2/OSTC, and KCP2 as well as the core subunit OST4, and subcomplex 3 contains RPN2, DAD1, and OST48. The STT3A complex can form stable complexes with the Sec61 complex or with both the Sec61 and TRAP complexes. Interacts with TMEM35A/NACHO. Ubiquitinated by the ECS(ASB11) complex. Ubiquitinated by RNF128, leading to degradation in a proteasome/lysosome-dependent manner. Post-translationally, ufmylated by UFL1 in response to endoplasmic reticulum stress, promoting reticulophagy of endoplasmic reticulum sheets.

It is found in the endoplasmic reticulum membrane. The protein operates within protein modification; protein glycosylation. Subunit of the oligosaccharyl transferase (OST) complex that catalyzes the initial transfer of a defined glycan (Glc(3)Man(9)GlcNAc(2) in eukaryotes) from the lipid carrier dolichol-pyrophosphate to an asparagine residue within an Asn-X-Ser/Thr consensus motif in nascent polypeptide chains, the first step in protein N-glycosylation. N-glycosylation occurs cotranslationally and the complex associates with the Sec61 complex at the channel-forming translocon complex that mediates protein translocation across the endoplasmic reticulum (ER). All subunits are required for a maximal enzyme activity. The chain is Dolichyl-diphosphooligosaccharide--protein glycosyltransferase subunit 1 from Mus musculus (Mouse).